The chain runs to 95 residues: Ribonuclease P protein component 1 (95 aa).

Belongs to the eukaryotic/archaeal RNase P protein component 1 family. As to quaternary structure, consists of a catalytic RNA component and at least 4 protein subunits. Forms a subcomplex with Rnp4 which stimulates the catalytic RNA.

The protein resides in the cytoplasm. The enzyme catalyses Endonucleolytic cleavage of RNA, removing 5'-extranucleotides from tRNA precursor.. Its function is as follows. Part of ribonuclease P, a protein complex that generates mature tRNA molecules by cleaving their 5'-ends. This is Ribonuclease P protein component 1 from Methanocaldococcus jannaschii (strain ATCC 43067 / DSM 2661 / JAL-1 / JCM 10045 / NBRC 100440) (Methanococcus jannaschii).